A 175-amino-acid polypeptide reads, in one-letter code: Gamma-crystallin A (175 aa).

2 Beta/gamma crystallin 'Greek key' domains span residues 2–40 (GKIT…RVDV) and 41–83 (HSWF…RLIP). The segment at 84-88 (QHTGT) is connecting peptide. Beta/gamma crystallin 'Greek key' domains lie at 89–129 (FRMR…RVLE) and 130–172 (GSWV…RRVM).

The protein belongs to the beta/gamma-crystallin family.

Its function is as follows. Crystallins are the dominant structural components of the vertebrate eye lens. This Bos taurus (Bovine) protein is Gamma-crystallin A (CRYGA).